The chain runs to 297 residues: UTP--glucose-1-phosphate uridylyltransferase (297 aa).

It belongs to the UDPGP type 2 family.

The enzyme catalyses alpha-D-glucose 1-phosphate + UTP + H(+) = UDP-alpha-D-glucose + diphosphate. It functions in the pathway carbohydrate metabolism; nucleotide-sugar metabolism. Its pathway is bacterial outer membrane biogenesis; lipopolysaccharide biosynthesis. This is UTP--glucose-1-phosphate uridylyltransferase (galF) from Escherichia coli O157:H7.